A 112-amino-acid chain; its full sequence is uncharacterized protein (112 aa).

The next 3 membrane-spanning stretches (helical) occupy residues 33–53 (PSPL…PFGA), 58–78 (LYIY…NVCT), and 91–111 (CVYV…LLFV).

Its subcellular location is the membrane. This is an uncharacterized protein from Saccharomyces cerevisiae (strain ATCC 204508 / S288c) (Baker's yeast).